Consider the following 162-residue polypeptide: MGLETEKADVQLFMDDDSYSRHSGVDYADPDKFADSGSDRDPHRLNSNLKVGFEDVIAEPVSTHSFDKVWICSHALFEISKYVIYKFLTLFLAIPLAFAAGILFATLSCLHIWIIMPFVKTCLMVLPSVQTIWKSITDVVIAPLCTSVGRSFSSVSLQLSHD.

The Cytoplasmic segment spans residues 1–86; that stretch reads MGLETEKADV…FEISKYVIYK (86 aa). Position 19 is a phosphotyrosine; by SRC (Y19). A phosphoserine mark is found at S20 and S23. Residue Y27 is modified to Phosphotyrosine; by SRC. S36 is subject to Phosphoserine. Positions 87–107 form an intramembrane region, helical; that stretch reads FLTLFLAIPLAFAAGILFATL. Over 108–162 the chain is Cytoplasmic; that stretch reads SCLHIWIIMPFVKTCLMVLPSVQTIWKSITDVVIAPLCTSVGRSFSSVSLQLSHD.

This sequence belongs to the caveolin family. Monomer or homodimer. Interacts with CAV1; the interaction forms a stable heterooligomeric complex that is required for targeting to lipid rafts and for caveolae formation. Tyrosine phosphorylated forms do not form heterooligomers with the Tyr-19-phosphorylated form existing as a monomer or dimer, and the Tyr-27-form as a monomer only. Interacts (tyrosine phosphorylated form) with the SH2 domain-containing proteins, RASA1, NCK1 and SRC. Interacts (tyrosine phosphorylated form) with INSR, the interaction (Tyr-27-phosphorylated form) is increased on insulin stimulation. Interacts (Tyr-19 phosphorylated form) with MAPK1 (phosphorylated form); the interaction, promoted by insulin, leads to nuclear location and MAPK1 activation. Interacts with STAT3; the interaction is increased on insulin-induced tyrosine phosphorylation leading to STAT activation. In terms of processing, phosphorylated on serine and tyrosine residues. CAV1 promotes phosphorylation on Ser-23 which then targets the complex to the plasma membrane, lipid rafts and caveolae. Phosphorylation on Ser-36 appears to modulate mitosis in endothelial cells. Phosphorylation on both Tyr-19 and Tyr-27 is required for insulin-induced 'Ser-727' phosphorylation of STAT3 and its activation. Phosphorylation on Tyr-19 is required for insulin-induced phosphorylation of MAPK1 and DNA binding of STAT3. Tyrosine phosphorylation is induced by both EGF and insulin (By. similarity).

It localises to the nucleus. Its subcellular location is the cytoplasm. The protein resides in the golgi apparatus membrane. The protein localises to the cell membrane. It is found in the membrane. It localises to the caveola. Functionally, may act as a scaffolding protein within caveolar membranes. Interacts directly with G-protein alpha subunits and can functionally regulate their activity. Acts as an accessory protein in conjunction with CAV1 in targeting to lipid rafts and driving caveolae formation. The Ser-36 phosphorylated form has a role in modulating mitosis in endothelial cells. Positive regulator of cellular mitogenesis of the MAPK signaling pathway. Required for the insulin-stimulated nuclear translocation and activation of MAPK1 and STAT3, and the subsequent regulation of cell cycle progression. This is Caveolin-2 (CAV2) from Neofelis nebulosa (Clouded leopard).